The following is a 163-amino-acid chain: NADH-quinone oxidoreductase subunit I (163 aa).

4Fe-4S ferredoxin-type domains follow at residues 54-84 (LRRY…IDSA) and 94-123 (TRYD…ETHI). Cys64, Cys67, Cys70, Cys74, Cys103, Cys106, Cys109, and Cys113 together coordinate [4Fe-4S] cluster.

This sequence belongs to the complex I 23 kDa subunit family. In terms of assembly, NDH-1 is composed of 14 different subunits. Subunits NuoA, H, J, K, L, M, N constitute the membrane sector of the complex. It depends on [4Fe-4S] cluster as a cofactor.

Its subcellular location is the cell inner membrane. The catalysed reaction is a quinone + NADH + 5 H(+)(in) = a quinol + NAD(+) + 4 H(+)(out). Its function is as follows. NDH-1 shuttles electrons from NADH, via FMN and iron-sulfur (Fe-S) centers, to quinones in the respiratory chain. The immediate electron acceptor for the enzyme in this species is believed to be ubiquinone. Couples the redox reaction to proton translocation (for every two electrons transferred, four hydrogen ions are translocated across the cytoplasmic membrane), and thus conserves the redox energy in a proton gradient. The chain is NADH-quinone oxidoreductase subunit I from Xanthomonas campestris pv. campestris (strain 8004).